We begin with the raw amino-acid sequence, 101 residues long: Apolipoprotein C-II (101 aa).

Positions 1 to 26 (MGTRYFLALFLILLVLGFKVQGVAMA) are cleaved as a signal peptide. The segment at 66 to 74 (TMDEKIRDI) is lipid binding. Residues 78–101 (STAAVTTYAGIFTDQLLSLLKGDQ) form a lipoprotein lipase cofactor region.

It belongs to the apolipoprotein C2 family. Post-translationally, proapolipoprotein C-II is synthesized as a sialic acid containing glycoprotein which is subsequently desialylated prior to its proteolytic processing. In terms of processing, proapolipoprotein C-II undergoes proteolytic cleavage of its N-terminal hexapeptide to generate apolipoprotein C-II. In bovine, proapolipoprotein C-II was found to be the minor form whereas apolipoprotein C-II was found to be the major form in plasma.

The protein localises to the secreted. Component of chylomicrons, very low-density lipoproteins (VLDL), low-density lipoproteins (LDL), and high-density lipoproteins (HDL) in plasma. Plays an important role in lipoprotein metabolism as an activator of lipoprotein lipase. Both proapolipoprotein C-II and apolipoprotein C-II can activate lipoprotein lipase. The sequence is that of Apolipoprotein C-II (APOC2) from Camelus dromedarius (Dromedary).